We begin with the raw amino-acid sequence, 323 residues long: Serine/threonine-protein phosphatase PP1-gamma catalytic subunit (323 aa).

N-acetylalanine is present on Ala-2. Residues Asp-64, His-66, Asp-92, and Asn-124 each coordinate Mn(2+). His-125 acts as the Proton donor in catalysis. Residues His-173 and His-248 each contribute to the Mn(2+) site. A phosphothreonine mark is found at Thr-307 and Thr-311.

Belongs to the PPP phosphatase family. PP-1 subfamily. In terms of assembly, PP1 comprises a catalytic subunit, PPP1CA, PPP1CB or PPP1CC, which is folded into its native form by inhibitor 2 and glycogen synthetase kinase 3, and then complexed to one or several targeting or regulatory subunits. PPP1R12A, PPP1R12B and PPP1R12C mediate binding to myosin. PPP1R3A (in skeletal muscle), PPP1R3B (in liver), PPP1R3C, PPP1R3D and PPP1R3F (in brain) mediate binding to glycogen. PPP1R15A and PPP1R15B mediate binding to EIF2S1. Part of a complex containing PPP1R15B, PP1 and NCK1/2. Interacts with PPP1R3B, PPP1R7 and CDCA2. Interacts with IKFZ1; the interaction targets PPP1CC to pericentromeric heterochromatin, dephosphorylates IKAROS, stabilizes it and prevents it from degradation. Interacts with NOM1 and PPP1R8. Component of the PTW/PP1 phosphatase complex, composed of PPP1R10/PNUTS, TOX4, WDR82, and PPP1CA or PPP1CB or PPP1CC. Interacts with PPP1R8. Interacts with NEK2. Interacts with PPP1R42; the interaction is direct. Interacts with URI1; the interaction is phosphorylation-dependent and occurs in a growth factor-dependent manner. Interacts with FOXP3. Interacts with TMEM225 (via RVxF motif). Interacts with MKI67. Interacts with RRP1B; this targets PPP1CC to the nucleolus. Interacts with DYNLT4. Interacts (via RVxF motif) with FIRRM; regulates PLK1 kinase activity. Interacts with the KNL1 complex subunit KNL1; the interaction is direct and mutually exclusive with KNL1 binding to microtubules. Component of the SHOC2-MRAS-PP1c (SMP) complex consisting of SHOC2, GTP-bound M-Ras/MRAS and the catalytic subunit of protein phosphatase 1 (either PPP1CA, PPP1CB or PPP1CC). SHOC2 and PP1c preferably bind M-Ras/MRAS, but they also bind K-Ras/KRAS, N-Ras/NRAS and H-Ras/HRAS; these interactions are GTP-dependent and both SHOC2 and PP1c are required to form a stable complex. Interacts with SHOC2 in the absence of Ras GTPases. The cofactor is Mn(2+). In terms of processing, phosphorylated by NEK2.

Its subcellular location is the cytoplasm. The protein resides in the nucleus. It localises to the cleavage furrow. It is found in the nucleolus. The protein localises to the nucleoplasm. Its subcellular location is the chromosome. The protein resides in the centromere. It localises to the kinetochore. It is found in the nucleus speckle. The protein localises to the midbody. Its subcellular location is the mitochondrion. The protein resides in the cytoskeleton. It localises to the microtubule organizing center. It carries out the reaction O-phospho-L-seryl-[protein] + H2O = L-seryl-[protein] + phosphate. The catalysed reaction is O-phospho-L-threonyl-[protein] + H2O = L-threonyl-[protein] + phosphate. Its activity is regulated as follows. Inactivated by binding to URI1. In terms of biological role, protein phosphatase that associates with over 200 regulatory proteins to form highly specific holoenzymes which dephosphorylate hundreds of biological targets. Protein phosphatase 1 (PP1) is essential for cell division, and participates in the regulation of glycogen metabolism, muscle contractility and protein synthesis. Dephosphorylates RPS6KB1. Involved in regulation of ionic conductances and long-term synaptic plasticity. May play an important role in dephosphorylating substrates such as the postsynaptic density-associated Ca(2+)/calmodulin dependent protein kinase II. Component of the PTW/PP1 phosphatase complex, which plays a role in the control of chromatin structure and cell cycle progression during the transition from mitosis into interphase. Regulates the recruitment of the SKA complex to kinetochores. Core component of the SHOC2-MRAS-PP1c (SMP) holophosphatase complex that regulates the MAPK pathway activation. Dephosphorylates MKI67 at the onset of anaphase. The SMP complex specifically dephosphorylates the inhibitory phosphorylation at 'Ser-259' of RAF1 kinase, 'Ser-365' of BRAF kinase and 'Ser-214' of ARAF kinase, stimulating their kinase activities. The SMP complex enhances the dephosphorylation activity and substrate specificity of PP1c. This is Serine/threonine-protein phosphatase PP1-gamma catalytic subunit (PPP1CC) from Canis lupus familiaris (Dog).